The following is a 1082-amino-acid chain: Sodium/potassium exporting P-type ATPase 2 (1082 aa).

The Cytoplasmic portion of the chain corresponds to 1–75 (MSSINTNVAE…GANTLGDGDK (75 aa)). A helical transmembrane segment spans residues 76–96 (ISLTKIIAHQVCNAMILVLII). Over 97–98 (SM) the chain is Extracellular. The chain crosses the membrane as a helical span at residues 99–119 (VIALAIKDWISGGVIGFVVLI). Residues 120–308 (NISVGFVQEY…VGTPLQRKLS (189 aa)) are Cytoplasmic-facing. The chain crosses the membrane as a helical span at residues 309-329 (WLAIFLFWGCRYFCNYCNGIP). Residues 330 to 336 (KNRVNKE) are Extracellular-facing. Residues 337 to 357 (VAIYAICVALSMIPSALIVVL) traverse the membrane as a helical segment. The Cytoplasmic portion of the chain corresponds to 358–807 (TITMAVGAQV…RMSSNIQKFV (450 aa)). Catalysis depends on Asp393, which acts as the 4-aspartylphosphate intermediate. Mg(2+) is bound by residues Asp393 and Thr395. Positions 395, 499, 552, 604, 664, 665, 666, 723, and 729 each coordinate ATP. Mg(2+) is bound at residue Asp748. ATP is bound at residue Asn751. The helical transmembrane segment at 808-828 (LQLLAENVAQALYLMVGLAFI) threads the bilayer. At 829 to 832 (DDSG) the chain is on the extracellular side. Residues 833–853 (LSVFPLSPVEVLWILVVTSCF) form a helical membrane-spanning segment. Over 854–884 (PAMDLGQERASDDILEESPNSTIFTWEVIID) the chain is Cytoplasmic. Residues 885–905 (MIVYGFWMAVCCLVCFVIIVY) traverse the membrane as a helical segment. The Extracellular segment spans residues 906–935 (GEGDPYLGVNCNKSSSSNSDVCELVFRGRS). The chain crosses the membrane as a helical span at residues 936-956 (ASFATMTWCALILAWECIHPY). Topologically, residues 957-983 (NSLFYMRQDTDHPWWKQTVIDLWDNQF) are cytoplasmic. The helical transmembrane segment at 984-1004 (LFWSVAIGFISVFPVVYIPVI) threads the bilayer. The Extracellular segment spans residues 1005-1007 (NTK). Residues 1008–1028 (VFLHGPIGYEWGLAVGFSILF) traverse the membrane as a helical segment. The Cytoplasmic segment spans residues 1029-1082 (LAGSELWKWIKRIHKRKANKKAKNPEYELERSDPFKKYASFSRSNTMDRPELMV).

The protein belongs to the cation transport ATPase (P-type) (TC 3.A.3) family. Type IID subfamily. It depends on Mg(2+) as a cofactor. The active site is phosphorylated in presence of sodium or potassium and in conditions of higher pH. Not phosphorylated in presence of calcium ions.

It localises to the cell membrane. It carries out the reaction Na(+)(in) + ATP + H2O = Na(+)(out) + ADP + phosphate + H(+). The catalysed reaction is K(+)(in) + ATP + H2O = K(+)(out) + ADP + phosphate + H(+). Its function is as follows. Catalyzes the hydrolysis of ATP coupled with the export of sodium and potassium from the cell. May be an inefficient sodium exporter. May transport other cations such as lithium. Sodium/potassium efflux ATPases are involved in salt tolerance and maintaining the membrane potential across the plasma membrane in high salinity (Na+) or alkaline (K+) environments. The protein is Sodium/potassium exporting P-type ATPase 2 of Schwanniomyces occidentalis (Yeast).